A 752-amino-acid polypeptide reads, in one-letter code: MRVDAIAKVTGRARYTDDYVMAGMCYAKYVRSPIAHGYAVSINDEQARSLPGVLAIFTWEDVPDIPFATAGHAWTLDENKRDTADRALLTRHVRHHGDAVAIVVARDELTAEKAAQLVSIEWQELPVITTPEAALAEDAAPIHNGGNLLKQSTMSTGNVQQTIDAADYQVQGHYQTPVIQHCHMESVTSLAWMEDDSRITIVSSTQIPHIVRRVVGQALDIPWSCVRVIKPFVGGGFGNKQDVLEEPMAAFLTSKLGGIPVKVSLSREECFLATRTRHAFTIDGQMGVNRDGTLKGYSLDVLSNTGAYASHGHSIASAGGNKVAYLYPRCAYAYSSKTCYTNLPSAGAMRGYGAPQVVFAVESMLDDAATALGIDPVEIRLRNAAREGDANPLTGKRIYSAGLPECLEKGRKIFEWEKRRAECQNQQGNLRRGVGVACFSYTSNTWPVGVEIAGARLLMNQDGTINVQSGATEIGQGADTVFSQMVAETVGVPVSDVRVISTQDTDVTPFDPGAFASRQSYVAAPALRSAALLLKEKIIAHAAVMLHQSAMNLTLIKGHIVLVERPEEPLMSLKDLAMDAFYHPERGGQLSAESSIKTTTNPPAFGCTFVDLTVDIALCKVTINRILNVHDSGHILNPLLAEGQVHGGMGMGIGWALFEEMIIDAKSGVVRNPNLLDYKMPTMPDLPQLESAFVEINEPQSAYGHKSLGEPPIIPVAAAIRNAVKMATGVAINTLPLTPKRLYEEFHLAGLI.

Residues Gln206, Phe237, Arg350, and Ala516 each coordinate Mo-molybdopterin.

This sequence belongs to the xanthine dehydrogenase family. In terms of assembly, heterotrimer of XdhA, XdhB and XdhC. Mo-molybdopterin is required as a cofactor.

The catalysed reaction is xanthine + NAD(+) + H2O = urate + NADH + H(+). The enzyme catalyses hypoxanthine + NAD(+) + H2O = xanthine + NADH + H(+). The protein operates within purine metabolism; hypoxanthine degradation; urate from hypoxanthine: step 1/2. It functions in the pathway purine metabolism; hypoxanthine degradation; urate from hypoxanthine: step 2/2. Presumed to be a dehydrogenase, but possibly an oxidase. Participates in limited purine salvage (requires aspartate) but does not support aerobic growth on purines as the sole carbon source (purine catabolism). Deletion results in increased adenine sensitivity, suggesting that this protein contributes to the conversion of adenine to guanine nucleotides during purine salvage. The sequence is that of Putative xanthine dehydrogenase molybdenum-binding subunit XdhA (xdhA) from Escherichia coli (strain K12).